The following is a 364-amino-acid chain: Medium-wave-sensitive opsin 2 (364 aa).

Positions 1–23 are disordered; sequence MAQQWSLQRLAGRHPQDSYEDST. Over 1-52 the chain is Extracellular; it reads MAQQWSLQRLAGRHPQDSYEDSTQSSIFTYTNSNSTRGPFEGPNYHIAPRWV. The tract at residues 17–43 is required for 11-cis-retinal regeneration; it reads DSYEDSTQSSIFTYTNSNSTRGPFEGP. N-linked (GlcNAc...) asparagine glycosylation is present at N34. The chain crosses the membrane as a helical span at residues 53 to 77; sequence YHLTSVWMIFVVIASVFTNGLVLAA. Over 78 to 89 the chain is Cytoplasmic; sequence TMKFKKLRHPLN. A helical transmembrane segment spans residues 90–115; that stretch reads WILVNLAVADLAETVIASTISVVNQV. At 116–129 the chain is on the extracellular side; sequence YGYFVLGHPMCVLE. A disulfide bridge links C126 with C203. A helical membrane pass occupies residues 130–149; it reads GYTVSLCGITGLWSLAIISW. The Cytoplasmic segment spans residues 150–168; sequence ERWMVVCKPFGNVRFDAKL. Residues 169–192 traverse the membrane as a helical segment; sequence AIVGIAFSWIWAAVWTAPPIFGWS. Over 193–218 the chain is Extracellular; it reads RYWPHGLKTSCGPDVFSGSSYPGVQS. The chain crosses the membrane as a helical span at residues 219-246; it reads YMIVLMVTCCITPLSIIVLCYLQVWLAI. Over 247 to 268 the chain is Cytoplasmic; the sequence is RAVAKQQKESESTQKAEKEVTR. A helical transmembrane segment spans residues 269–292; the sequence is MVVVMVLAFCFCWGPYAFFACFAA. The Extracellular portion of the chain corresponds to 293 to 300; that stretch reads ANPGYPFH. A helical transmembrane segment spans residues 301-325; sequence PLMAALPAFFAKSATIYNPVIYVFM. K312 bears the N6-(retinylidene)lysine mark. At 326 to 364 the chain is on the cytoplasmic side; sequence NRQFRNCILQLFGKKVDDGSELSSASKTEVSSVSSVSPA.

It belongs to the G-protein coupled receptor 1 family. Opsin subfamily. Post-translationally, N-glycosylated. O-glycosylated. Phosphorylated on some or all of the serine and threonine residues present in the C-terminal region.

It localises to the cell membrane. Functionally, visual pigments are the light-absorbing molecules that mediate vision. They consist of an apoprotein, opsin, covalently linked to cis-retinal. This Homo sapiens (Human) protein is Medium-wave-sensitive opsin 2.